We begin with the raw amino-acid sequence, 445 residues long: Glucose-6-phosphate isomerase (445 aa).

Residue glutamate 287 is the Proton donor of the active site. Active-site residues include histidine 308 and lysine 422.

The protein belongs to the GPI family.

It is found in the cytoplasm. The enzyme catalyses alpha-D-glucose 6-phosphate = beta-D-fructose 6-phosphate. Its pathway is carbohydrate biosynthesis; gluconeogenesis. It functions in the pathway carbohydrate degradation; glycolysis; D-glyceraldehyde 3-phosphate and glycerone phosphate from D-glucose: step 2/4. Its function is as follows. Catalyzes the reversible isomerization of glucose-6-phosphate to fructose-6-phosphate. The polypeptide is Glucose-6-phosphate isomerase (Bacteroides thetaiotaomicron (strain ATCC 29148 / DSM 2079 / JCM 5827 / CCUG 10774 / NCTC 10582 / VPI-5482 / E50)).